Consider the following 693-residue polypeptide: Sodium-dependent dopamine transporter (693 aa).

Residues 1 to 56 are Cytoplasmic-facing; it reads MSEGRCSVAHMSSVVAPAKEANAMGPKAVELVLVKEQNGVQLTNSTLLNPPQSPTE. A discontinuously helical transmembrane segment spans residues 57–95; sequence AQDRETWSKKADFLLSVIGFAVDLANVWRFPYLCYKNGG. Na(+) contacts are provided by G75, A77, V78, D79, and N82. Residue D79 coordinates dopamine. 2 consecutive transmembrane segments (helical) span residues 96–127 and 128–171; these read GAFLVPYLFFMVVAGVPLFYMELALGQFNREG and AAGV…LSSF. Positions 149 and 153 each coordinate dopamine. Residues 172–233 are Extracellular-facing; sequence TTELPWTHCN…SQGIDDLGPP (62 aa). C180 and C189 are disulfide-bonded. N-linked (GlcNAc...) asparagine glycosylation is found at N181, N196, and N202. A run of 2 helical transmembrane segments spans residues 234-253 and 254-284; these read RWQLTSCLVLVIVLLYFSLW and KGVKTSGKVVWITATMPYVVLFALLLRGITL. Residues 285-303 are Extracellular-facing; that stretch reads PGAVDAIRAYLSVDFHRLC. Residues 304–332 form a discontinuously helical membrane-spanning segment; it reads EASVWIDAAIQICFSLGVGLGVLIAFSSY. Q314 serves as a coordination point for chloride. Residue F317 participates in dopamine binding. Na(+) is bound by residues S318 and N350. S318 provides a ligand contact to chloride. Residues 333-373 traverse the membrane as a helical segment; sequence NKFTNNCYRDAIITTSVNSLTSFSSGFVVFSFLGYMAQKHS. A chloride-binding site is contributed by S354. Residues 374–397 are Extracellular-facing; that stretch reads VPIGDVAKDGPGLIFIIYPEALAT. Helical transmembrane passes span 398 to 439, 440 to 463, and 464 to 496; these read LPLS…QLLH, RHRELFTLLVVLATFLLSLFCVTN, and GGIYVFTLLDHFAAGTSILFGVLMEVIGVAWFY. L415, D418, and S419 together coordinate Na(+). Residues S419 and A420 each coordinate dopamine. The Cytoplasmic portion of the chain corresponds to 497–513; it reads GVWQFSDDIKQMTGRRP. A helical membrane pass occupies residues 514-539; the sequence is SLYWRLCWKFVSPCFLLFVVVVSIAT. The Extracellular portion of the chain corresponds to 540–550; it reads FRPPHYGAYVF. The helical transmembrane segment at 551-580 threads the bilayer; the sequence is PEWATALGWAIAASSMSVVPIYAAYKLCSL. Positions 558-587 are interaction with TGFB1I1; the sequence is GWAIAASSMSVVPIYAAYKLCSLPGSSREK. The Cytoplasmic segment spans residues 581–693; the sequence is PGSSREKLAY…VESTGLCSVY (113 aa).

This sequence belongs to the sodium:neurotransmitter symporter (SNF) (TC 2.A.22) family. SLC6A3 subfamily. Monomer. Homooligomer; disulfide-linked. Interacts with PRKCABP and TGFB1I1. Interacts (via N-terminus) with SYNGR3 (via N-terminus). Interacts with SLC18A2. Interacts with TOR1A (ATP-bound); TOR1A regulates SLC6A3 subcellular location. Interacts with alpha-synuclein/SNCA. Interacts with SEPTIN4. In terms of tissue distribution, expressed in the neurons of the substantia nigra of the brain.

The protein localises to the cell membrane. It localises to the cell projection. Its subcellular location is the neuron projection. It is found in the axon. It catalyses the reaction dopamine(out) + chloride(out) + Na(+)(out) = dopamine(in) + chloride(in) + Na(+)(in). The catalysed reaction is (R)-noradrenaline(out) + chloride(out) + Na(+)(out) = (R)-noradrenaline(in) + chloride(in) + Na(+)(in). It carries out the reaction dopamine(out) + chloride(out) + 2 Na(+)(out) = dopamine(in) + chloride(in) + 2 Na(+)(in). Its activity is regulated as follows. Inhibited by GBR 12909 dihydrochloride, amphetamine and cocaine. Inhibited by zinc ions. Mediates sodium- and chloride-dependent transport of dopamine. Also mediates sodium- and chloride-dependent transport of norepinephrine (also known as noradrenaline). Regulator of light-dependent retinal hyaloid vessel regression, downstream of OPN5 signaling. In Bos taurus (Bovine), this protein is Sodium-dependent dopamine transporter (SLC6A3).